The chain runs to 122 residues: UPF0231 protein VF_2154 (122 aa).

This sequence belongs to the UPF0231 family.

This chain is UPF0231 protein VF_2154, found in Aliivibrio fischeri (strain ATCC 700601 / ES114) (Vibrio fischeri).